The following is a 61-amino-acid chain: Small ribosomal subunit protein uS14B (61 aa).

Cys24, Cys27, Cys40, and Cys43 together coordinate Zn(2+).

The protein belongs to the universal ribosomal protein uS14 family. Zinc-binding uS14 subfamily. Part of the 30S ribosomal subunit. Contacts proteins S3 and S10. It depends on Zn(2+) as a cofactor.

In terms of biological role, binds 16S rRNA, required for the assembly of 30S particles and may also be responsible for determining the conformation of the 16S rRNA at the A site. In Mycobacterium bovis (strain ATCC BAA-935 / AF2122/97), this protein is Small ribosomal subunit protein uS14B.